The sequence spans 313 residues: Porphobilinogen deaminase (313 aa).

S-(dipyrrolylmethanemethyl)cysteine is present on Cys242.

It belongs to the HMBS family. As to quaternary structure, monomer. Dipyrromethane serves as cofactor.

The enzyme catalyses 4 porphobilinogen + H2O = hydroxymethylbilane + 4 NH4(+). The protein operates within porphyrin-containing compound metabolism; protoporphyrin-IX biosynthesis; coproporphyrinogen-III from 5-aminolevulinate: step 2/4. Functionally, tetrapolymerization of the monopyrrole PBG into the hydroxymethylbilane pre-uroporphyrinogen in several discrete steps. The polypeptide is Porphobilinogen deaminase (Shigella flexneri).